The chain runs to 166 residues: NADH-ubiquinone oxidoreductase chain 6 (166 aa).

5 consecutive transmembrane segments (helical) span residues 1–21 (MMYF…AFAS), 26–46 (IYGG…IVSL), 47–67 (GGSF…LVVF), 86–106 (TVVL…YEFF), and 139–159 (CGGW…FVVL).

The protein belongs to the complex I subunit 6 family. Core subunit of respiratory chain NADH dehydrogenase (Complex I) which is composed of 45 different subunits.

Its subcellular location is the mitochondrion inner membrane. The catalysed reaction is a ubiquinone + NADH + 5 H(+)(in) = a ubiquinol + NAD(+) + 4 H(+)(out). Functionally, core subunit of the mitochondrial membrane respiratory chain NADH dehydrogenase (Complex I) which catalyzes electron transfer from NADH through the respiratory chain, using ubiquinone as an electron acceptor. Essential for the catalytic activity and assembly of complex I. The polypeptide is NADH-ubiquinone oxidoreductase chain 6 (MT-ND6) (Tachyglossus aculeatus aculeatus (Southeast Australian short-beaked echidna)).